A 593-amino-acid polypeptide reads, in one-letter code: Dolichyl-phosphooligosaccharide-protein glycotransferase 2 (593 aa).

Topologically, residues 1-12 (MTPVGMDRKSLS) are cytoplasmic. Residues 13 to 33 (LLILIVLLGLCIRLQNFGEIF) traverse the membrane as a helical segment. The Extracellular portion of the chain corresponds to 34-98 (DSRIYYYGYD…GLFLGFWASE (65 aa)). A DXD motif 1 motif is present at residues 41–43 (GYD). Position 43 (Asp43) interacts with Mn(2+). A helical membrane pass occupies residues 99-119 (IFAVVFPVIIGVLCIVLVYLI). Over 120-128 (SLEVLRNEK) the chain is Cytoplasmic. A helical transmembrane segment spans residues 129 to 149 (FALISAFIFSVCPVTVWKSLL). At 150–154 (GKADH) the chain is on the extracellular side. Asp153 lines the Mn(2+) pocket. Positions 153-155 (DHH) match the DXD motif 2 motif. A glycophospholipid is bound at residue His154. His155 contacts Mn(2+). Residues 155-175 (HIWVVFLLLLSIWLVTKPGLL) form a helical membrane-spanning segment. At 176 to 180 (KLLSG) the chain is on the cytoplasmic side. Residues 181–201 (IPMLLMALSWLGAPIYAALLA) form a helical membrane-spanning segment. Residues 202-229 (VSSLFQFNEKEVRIVGISNLIPVLSSIQ) are Extracellular-facing. The helical transmembrane segment at 230–250 (NLFLGFSFLAIAVFLLVGSFV) threads the bilayer. The Cytoplasmic portion of the chain corresponds to 251–265 (KRFERRFRYAIVYYL). The helical transmembrane segment at 266–286 (CICSVALLSAYLMPVGWLGFV) threads the bilayer. The Extracellular segment spans residues 287 to 310 (KSGISYVLGTDIYLPTIREARSFQ). The TIXE motif motif lies at 302–305 (TIRE). The chain crosses the membrane as a helical span at residues 311–331 (ILGVISSAGYLFFVLAIPALF). Met332 is a topological domain (cytoplasmic). The helical transmembrane segment at 333-353 (LRNGFLKVFFVLSFLISILQL) threads the bilayer. Residue Arg354 is a topological domain, extracellular. Arg354 serves as a coordination point for a glycophospholipid. Residues 355 to 375 (FVEVLAFPVAILASYTICQIL) form a helical membrane-spanning segment. The Cytoplasmic portion of the chain corresponds to 376-411 (ERVDYPVFRKEEEGESKRRGRKEKKKAVEIRKKDHA). Residues 412–432 (TVIAFLLFLALPCFANSLAPV) traverse the membrane as a helical segment. Over 433–593 (EMTMDWKEAL…FGTVKIFEVK (161 aa)) the chain is Extracellular. The interval 468 to 470 (WWD) is interacts with target acceptor peptide in protein substrate. The WWDYG motif signature appears at 468–472 (WWDYG). Residues 524–539 (ELTVKPETNKTKFIPI) carry the DKi motif motif.

This sequence belongs to the STT3 family. Mn(2+) serves as cofactor. Mg(2+) is required as a cofactor. Requires Zn(2+) as cofactor.

It is found in the cell membrane. The catalysed reaction is an archaeal dolichyl phosphooligosaccharide + [protein]-L-asparagine = an archaeal dolichyl phosphate + a glycoprotein with the oligosaccharide chain attached by N-beta-D-glycosyl linkage to a protein L-asparagine.. The protein operates within protein modification; protein glycosylation. Oligosaccharyl transferase (OST) that catalyzes the initial transfer of a defined glycan (a GalNAc-linked heptasaccharide composed of 4 Hex, 3 dHex and a sulfate for A.fulgidus AglB-S) from the lipid carrier dolichol-monophosphate to an asparagine residue within an Asn-X-Ser/Thr consensus motif in nascent polypeptide chains, the first step in protein N-glycosylation. The polypeptide is Dolichyl-phosphooligosaccharide-protein glycotransferase 2 (aglB2) (Archaeoglobus fulgidus (strain ATCC 49558 / DSM 4304 / JCM 9628 / NBRC 100126 / VC-16)).